The chain runs to 321 residues: Thioredoxin reductase tcpT (321 aa).

Residues 14–17 (GGPA), 36–41 (DSGRYR), histidine 49, and alanine 114 each bind FAD. A disulfide bridge links cysteine 138 with cysteine 141. FAD is bound by residues aspartate 282 and 289-290 (NV).

It belongs to the class-II pyridine nucleotide-disulfide oxidoreductase family. Homodimer. FAD serves as cofactor.

It functions in the pathway secondary metabolite biosynthesis. Thioredoxin reductase; part of the gene cluster that mediates the biosynthesis of an unusual class of epipolythiodioxopiperazines (ETPs) lacking the reactive thiol group important for toxicity. Firstly, L-tyrosine is prenylated by tcpD, before undergoing condensation with L-glycine in a reaction catalyzed by the NRPS tcpP leading to the diketopiperazine (DKP) backbone. Afterwards the alpha-carbon of tyrosine is oxidized by the cytochrome P450 tcpC to form a hydroxyl group. However, in contrast other ETP biosynthesis pathways studied so far, tcpC is not able to bishydroxylate the DKP at both alpha-carbon positions, but hydroxylates the alpha-carbon of the tyrosine part and the nitrogen of the glycine part. The next steps involve an alpha,beta-elimination reaction catalyzed by tcpI, a methylation by the methyltransferase tcpN the action of the four enzyme cascade tcpG/K/J/I. Due to a dysfunctional cytochrome P450 monooxygenase tcpC, the pathway leads to the biosynthesis of probable non-toxic metabolites lacking the reactive thiol group. This is Thioredoxin reductase tcpT from Claviceps purpurea (strain 20.1) (Ergot fungus).